We begin with the raw amino-acid sequence, 680 residues long: DNA ligase (680 aa).

NAD(+) contacts are provided by residues 44 to 48 (DHVYD), 93 to 94 (SM), and E125. K127 (N6-AMP-lysine intermediate) is an active-site residue. Residues R148, E182, K298, and K322 each contribute to the NAD(+) site. Zn(2+) contacts are provided by C416, C419, C434, and C439. Positions 600–680 (NPDSEWNGRR…QFSQAMKEEQ (81 aa)) constitute a BRCT domain.

Belongs to the NAD-dependent DNA ligase family. LigA subfamily. It depends on Mg(2+) as a cofactor. Requires Mn(2+) as cofactor.

The catalysed reaction is NAD(+) + (deoxyribonucleotide)n-3'-hydroxyl + 5'-phospho-(deoxyribonucleotide)m = (deoxyribonucleotide)n+m + AMP + beta-nicotinamide D-nucleotide.. DNA ligase that catalyzes the formation of phosphodiester linkages between 5'-phosphoryl and 3'-hydroxyl groups in double-stranded DNA using NAD as a coenzyme and as the energy source for the reaction. It is essential for DNA replication and repair of damaged DNA. This chain is DNA ligase, found in Limosilactobacillus reuteri (strain DSM 20016) (Lactobacillus reuteri).